A 362-amino-acid chain; its full sequence is Porin Omp2b (362 aa).

The first 22 residues, 1 to 22 (MNIKSLLLGSAAALVAASGAQA), serve as a signal peptide directing secretion.

This sequence belongs to the alphaproteobacteria porin family. As to quaternary structure, homotrimer.

Its subcellular location is the cell outer membrane. In terms of biological role, forms passive diffusion pores that allow small molecular weight hydrophilic materials across the outer membrane. This is Porin Omp2b (omp2b) from Brucella canis (strain ATCC 23365 / NCTC 10854 / RM-666).